A 768-amino-acid polypeptide reads, in one-letter code: MDVNEVEENFFAPGDAKLHGKMCNALSVIYCKIMSIFPSLEAARPRSKSGIQALCSLHVVLEKVKNILRHCTESSKLYLAITGDSVVLKFEKAKSSLTDSLRRVEDIVQQSIGSQLLEILMELENTEFSLDPAEKEIGDQIIGLLQQGGNFESSSDNNELEVFHQAATRLGITSSRAALTERRCLKKLIERARMEDDKRKESIVAYLLHLMRKYSKLFRSEIWDDNDSQGSSSLPCSPTIQGSIDDAHGRAFDRQLSKLSSFNFRSCNNNRRSSQMSVPPEELRCPISLQLMYDPVIIASGQTYERICIEKWFSDGHNTCPKTHQQLSHLCLTPNYCVKALISSWCEQNGVQVPDGPPESLDLNYWRLALSVSESTDTRSAKRVGSCKLKDVKVVPLEESGTIKEEACESEYQEDQVTLVERCTELLTTLTDVDTLRKKCRVVEQIRVLLKDDEEARILMGENGCVEALLQFLGSALNENNASAQKVGAMALFNLAVDNNRNKELMLASGIIPLLEEMLCNPHSHGSVTAIYLNLSCLEEAKPVIGSSLAVPFMVNLLWTETEVQCKVDALHSLFHLSTYPPNIPCLLSADLVNALQSLTISDEQRWTEKSLAVLLNLVLNEAGKDEMVSAPSLVSNLCTILDTGEPNEQEQAVSLLLILCNHSEICSEMVLQEGVIPSLVSISVNGTQRGRERAQKLLTLFRELRQRDQTHLTEPQHTEVTSPEDGFSVASAAVTETKPQCKSASRKKMGRAFSFLWKSKSFSVYQC.

The U-box domain occupies 278–352 (VPPEELRCPI…SSWCEQNGVQ (75 aa)). ARM repeat units follow at residues 454–497 (EEAR…NLAV), 500–540 (NRNK…CLEE), 542–579 (KPVIGSSLAVPFMVNLLWTETEVQCKVDALHSLFHLST), 581–620 (PPNIPCLLSADLVNALQSLTISDEQRWTEKSLAVLLNLVL), and 623–662 (AGKDEMVSAPSLVSNLCTILDTGEPNEQEQAVSLLLILCN).

Binds to SD129.

The enzyme catalyses S-ubiquitinyl-[E2 ubiquitin-conjugating enzyme]-L-cysteine + [acceptor protein]-L-lysine = [E2 ubiquitin-conjugating enzyme]-L-cysteine + N(6)-ubiquitinyl-[acceptor protein]-L-lysine.. The protein operates within protein modification; protein ubiquitination. Functionally, functions as an E3 ubiquitin ligase. The polypeptide is U-box domain-containing protein 45 (PUB45) (Arabidopsis thaliana (Mouse-ear cress)).